We begin with the raw amino-acid sequence, 514 residues long: Photosystem II CP47 reaction center protein (514 aa).

Helical transmembrane passes span 21 to 36, 109 to 123, 148 to 164, 211 to 226, 245 to 260, and 465 to 480; these read AVHL…WAGS, IVLS…VWHW, GGHL…FGTF, IAAG…FHLT, ALAS…AFVV, and CFAL…HGAR.

The protein belongs to the PsbB/PsbC family. PsbB subfamily. As to quaternary structure, PSII is composed of 1 copy each of membrane proteins PsbA, PsbB, PsbC, PsbD, PsbE, PsbF, PsbH, PsbI, PsbJ, PsbK, PsbL, PsbM, PsbT, PsbX, PsbY, PsbZ, Psb30/Ycf12, peripheral proteins PsbO, CyanoQ (PsbQ), PsbU, PsbV and a large number of cofactors. It forms dimeric complexes. The cofactor is Binds multiple chlorophylls. PSII binds additional chlorophylls, carotenoids and specific lipids..

The protein resides in the cellular thylakoid membrane. Its function is as follows. One of the components of the core complex of photosystem II (PSII). It binds chlorophyll and helps catalyze the primary light-induced photochemical processes of PSII. PSII is a light-driven water:plastoquinone oxidoreductase, using light energy to abstract electrons from H(2)O, generating O(2) and a proton gradient subsequently used for ATP formation. In Prochlorothrix hollandica, this protein is Photosystem II CP47 reaction center protein.